The primary structure comprises 275 residues: Vitamin B12-binding protein (275 aa).

A signal peptide spans methionine 1–alanine 19. In terms of domain architecture, Fe/B12 periplasmic-binding spans arginine 25–lysine 272. Cysteines 185 and 265 form a disulfide.

Belongs to the BtuF family. The complex is composed of two ATP-binding proteins (BtuD), two transmembrane proteins (BtuC) and a solute-binding protein (BtuF).

It is found in the periplasm. Functionally, part of the ABC transporter complex BtuCDF involved in vitamin B12 import. Binds vitamin B12 and delivers it to the periplasmic surface of BtuC. In Vibrio parahaemolyticus serotype O3:K6 (strain RIMD 2210633), this protein is Vitamin B12-binding protein.